Reading from the N-terminus, the 482-residue chain is MPQLPMTDSAPLPTPAPSSPAQPSAQPSLHYHLLGIGGIGMSAFARLLATRGHRVSGCDQNLGAQTAGLEAQGIPVAAGHAAAHVTEEPFGKIDVLVASEAVPKSHPELAAARAAGVEVRPRMALLGELLAAGPSVGVIGTHGKTTTTSMIAVAMYGAGLDPSAFVGGNVPEFGGNARTGTGPFVAEVDESDRGFALLGCETAVFTNAEDDHVGGELATYWSTVEEQHAGFARFVAQSGRVLFCADWPGLDTLCSGAREQLTYGQSAGADYRAVNVRPDESGTTFDVEFRGERLGEARVSLPGTHNVLNGLAALAVTHLYGGDFDRAARALADFHGPGRRWEIKGERGGALVVDDYAHNATKVASAVQAARQTGRRVRVVFQPHRYLRTQQSWPRLADALMDADEVLVLDIAAASETPIEGVHATLITDRMTQGGHPNVHYCPDRAAVVRDLRESAQPGDIIVTMGAGDVYRIAEEVVGGSA.

Residues 1–26 (MPQLPMTDSAPLPTPAPSSPAQPSAQ) form a disordered region. 140–146 (GTHGKTT) is an ATP binding site.

Belongs to the MurCDEF family.

Its subcellular location is the cytoplasm. It catalyses the reaction UDP-N-acetyl-alpha-D-muramate + L-alanine + ATP = UDP-N-acetyl-alpha-D-muramoyl-L-alanine + ADP + phosphate + H(+). Its pathway is cell wall biogenesis; peptidoglycan biosynthesis. Functionally, cell wall formation. The chain is UDP-N-acetylmuramate--L-alanine ligase from Deinococcus radiodurans (strain ATCC 13939 / DSM 20539 / JCM 16871 / CCUG 27074 / LMG 4051 / NBRC 15346 / NCIMB 9279 / VKM B-1422 / R1).